The chain runs to 200 residues: MASHQDQASYRAGETKAHTEEKAGQVMGASKDKASEAKDRASEAAGHAAGKGQDTKEATKEKAQAAKERASETAQAAKDKTSGTAQAARDKAAESKDQTGGFLGEKTEQAKQKAAETAGAAKQKTAETAQYTKDSAIAGKDKTGSVLQQASEQVKSTVVGAKDAVMSTLGMTEDKAGTDDGANKDTSATAAATETTARDH.

2 disordered regions span residues 1-158 and 172-200; these read MASH…KSTV and TEDK…ARDH. 5 stretches are compositionally biased toward basic and acidic residues: residues 13–23, 30–42, 53–81, 88–97, and 105–114; these read GETKAHTEEKA, SKDK…DRAS, QDTK…KDKT, ARDKAAESKD, and EKTEQAKQKA. The stretch at 52-81 forms a coiled coil; sequence GQDTKEATKEKAQAAKERASETAQAAKDKT. Low complexity predominate over residues 115-130; it reads AETAGAAKQKTAETAQ. Over residues 145 to 156 the composition is skewed to polar residues; that stretch reads SVLQQASEQVKS. Residues 172–183 show a composition bias toward basic and acidic residues; it reads TEDKAGTDDGAN. A compositionally biased stretch (low complexity) spans 186–200; the sequence is TSATAAATETTARDH.

It belongs to the LEA type 4 family. Expressed in the shoot apex and leaves.

In terms of biological role, involved in response to drought stress. This Oryza sativa subsp. indica (Rice) protein is Late embryogenesis abundant protein 19.